Reading from the N-terminus, the 74-residue chain is Large ribosomal subunit protein uL29 (74 aa).

It belongs to the universal ribosomal protein uL29 family.

The protein is Large ribosomal subunit protein uL29 of Streptomyces griseus subsp. griseus (strain JCM 4626 / CBS 651.72 / NBRC 13350 / KCC S-0626 / ISP 5235).